We begin with the raw amino-acid sequence, 293 residues long: 4-hydroxy-tetrahydrodipicolinate synthase (293 aa).

Residue Ser45 participates in pyruvate binding. The active-site Proton donor/acceptor is Tyr133. Lys161 (schiff-base intermediate with substrate) is an active-site residue. Ile203 is a pyruvate binding site.

It belongs to the DapA family. Homotetramer; dimer of dimers.

The protein resides in the cytoplasm. The catalysed reaction is L-aspartate 4-semialdehyde + pyruvate = (2S,4S)-4-hydroxy-2,3,4,5-tetrahydrodipicolinate + H2O + H(+). It participates in amino-acid biosynthesis; L-lysine biosynthesis via DAP pathway; (S)-tetrahydrodipicolinate from L-aspartate: step 3/4. In terms of biological role, catalyzes the condensation of (S)-aspartate-beta-semialdehyde [(S)-ASA] and pyruvate to 4-hydroxy-tetrahydrodipicolinate (HTPA). The chain is 4-hydroxy-tetrahydrodipicolinate synthase from Psychromonas ingrahamii (strain DSM 17664 / CCUG 51855 / 37).